The primary structure comprises 65 residues: NADH dehydrogenase [ubiquinone] 1 alpha subcomplex subunit 1 (65 aa).

A helical transmembrane segment spans residues 3–23 (LVWLEAMLPLGIIGGMLCIMG).

It belongs to the complex I NDUFA1 subunit family. Complex I is composed of at least 49 different subunits.

The protein localises to the mitochondrion inner membrane. Accessory subunit of the mitochondrial membrane respiratory chain NADH dehydrogenase (Complex I), that is believed not to be involved in catalysis. Complex I functions in the transfer of electrons from NADH to the respiratory chain. The immediate electron acceptor for the enzyme is believed to be ubiquinone. The sequence is that of NADH dehydrogenase [ubiquinone] 1 alpha subcomplex subunit 1 from Arabidopsis thaliana (Mouse-ear cress).